Here is a 460-residue protein sequence, read N- to C-terminus: Lipase member H-A (460 aa).

A signal peptide spans 1 to 26 (MLLSFYFNGLLLVGCLLSWGRSDTEG). N-linked (GlcNAc...) asparagine glycans are attached at residues asparagine 67 and asparagine 75. The active-site Nucleophile is the serine 163. An N-linked (GlcNAc...) asparagine glycan is attached at asparagine 177. Catalysis depends on aspartate 187, which acts as the Charge relay system. Cysteine 242 and cysteine 255 are oxidised to a cystine. The Charge relay system role is filled by histidine 257. 2 disulfides stabilise this stretch: cysteine 279–cysteine 290 and cysteine 293–cysteine 301. Residue asparagine 289 is glycosylated (N-linked (GlcNAc...) asparagine). N-linked (GlcNAc...) asparagine glycosylation occurs at asparagine 366. A disulfide bridge connects residues cysteine 436 and cysteine 455.

This sequence belongs to the AB hydrolase superfamily. Lipase family.

Its subcellular location is the secreted. The protein resides in the cell membrane. The enzyme catalyses 1-hexadecanoyl-2-(9Z-octadecenoyl)-sn-glycero-3-phosphate + H2O = 2-(9Z-octadecenoyl)-sn-glycero-3-phosphate + hexadecanoate + H(+). Hydrolyzes specifically phosphatidic acid (PA) to produce 2-acyl lysophosphatidic acid (LPA; a potent bioactive lipid mediator) and fatty acid. Does not hydrolyze other phospholipids, like phosphatidylserine (PS), phosphatidylcholine (PC) and phosphatidylethanolamine (PE) or triacylglycerol (TG). This Xenopus laevis (African clawed frog) protein is Lipase member H-A (liph-a).